The following is a 298-amino-acid chain: HTH-type transcriptional regulator ArgP (298 aa).

Residues 4-60 (LDYRWIEALDSVVSKGSFERAAEQLFISQSAVSQRIKQLEKYLAQPVLIREQPPRPT) enclose the HTH lysR-type domain. Positions 21 to 40 (FERAAEQLFISQSAVSQRIK) form a DNA-binding region, H-T-H motif.

The protein belongs to the LysR transcriptional regulatory family. In terms of assembly, homodimer.

In terms of biological role, controls the transcription of genes involved in arginine and lysine metabolism. This is HTH-type transcriptional regulator ArgP from Vibrio cholerae serotype O1 (strain ATCC 39541 / Classical Ogawa 395 / O395).